Consider the following 324-residue polypeptide: Thiamine thiazole synthase (324 aa).

Residues C86, 107 to 108 (EA), G115, and V180 each bind substrate. 2,3-didehydroalanine (Cys) is present on C213. Residues D215, H230, M282, and 292–294 (RMG) each bind substrate.

The protein belongs to the THI4 family. In terms of assembly, homooctamer. Fe cation serves as cofactor. During the catalytic reaction, a sulfide is transferred from Cys-213 to a reaction intermediate, generating a dehydroalanine residue.

The protein localises to the cytoplasm. It is found in the nucleus. The enzyme catalyses [ADP-thiazole synthase]-L-cysteine + glycine + NAD(+) = [ADP-thiazole synthase]-dehydroalanine + ADP-5-ethyl-4-methylthiazole-2-carboxylate + nicotinamide + 3 H2O + 2 H(+). Its function is as follows. Involved in biosynthesis of the thiamine precursor thiazole. Catalyzes the conversion of NAD and glycine to adenosine diphosphate 5-(2-hydroxyethyl)-4-methylthiazole-2-carboxylic acid (ADT), an adenylated thiazole intermediate. The reaction includes an iron-dependent sulfide transfer from a conserved cysteine residue of the protein to a thiazole intermediate. The enzyme can only undergo a single turnover, which suggests it is a suicide enzyme. May have additional roles in adaptation to various stress conditions and in DNA damage tolerance. In Fusarium solani subsp. phaseoli (Nectria haematococca), this protein is Thiamine thiazole synthase (sti35).